The sequence spans 159 residues: Ribosomal RNA large subunit methyltransferase H (159 aa).

S-adenosyl-L-methionine contacts are provided by residues Leu76, Gly108, and 127-132 (FSKMTF).

It belongs to the RNA methyltransferase RlmH family. As to quaternary structure, homodimer.

Its subcellular location is the cytoplasm. It carries out the reaction pseudouridine(1915) in 23S rRNA + S-adenosyl-L-methionine = N(3)-methylpseudouridine(1915) in 23S rRNA + S-adenosyl-L-homocysteine + H(+). Specifically methylates the pseudouridine at position 1915 (m3Psi1915) in 23S rRNA. In Shouchella clausii (strain KSM-K16) (Alkalihalobacillus clausii), this protein is Ribosomal RNA large subunit methyltransferase H.